Consider the following 179-residue polypeptide: NAD(P)H-quinone oxidoreductase subunit I, chloroplastic (179 aa).

2 consecutive 4Fe-4S ferredoxin-type domains span residues 55–84 (GRIHFEFDKCIACEVCVRVCPIDLPVVDWR) and 95–124 (LNYSIDFGICIFCGNCVEYCPTNCLSMTEE). C64, C67, C70, C74, C104, C107, C110, and C114 together coordinate [4Fe-4S] cluster.

Belongs to the complex I 23 kDa subunit family. In terms of assembly, NDH is composed of at least 16 different subunits, 5 of which are encoded in the nucleus. Requires [4Fe-4S] cluster as cofactor.

It is found in the plastid. It localises to the chloroplast thylakoid membrane. The enzyme catalyses a plastoquinone + NADH + (n+1) H(+)(in) = a plastoquinol + NAD(+) + n H(+)(out). It carries out the reaction a plastoquinone + NADPH + (n+1) H(+)(in) = a plastoquinol + NADP(+) + n H(+)(out). Its function is as follows. NDH shuttles electrons from NAD(P)H:plastoquinone, via FMN and iron-sulfur (Fe-S) centers, to quinones in the photosynthetic chain and possibly in a chloroplast respiratory chain. The immediate electron acceptor for the enzyme in this species is believed to be plastoquinone. Couples the redox reaction to proton translocation, and thus conserves the redox energy in a proton gradient. The polypeptide is NAD(P)H-quinone oxidoreductase subunit I, chloroplastic (Nymphaea alba (White water-lily)).